Here is a 572-residue protein sequence, read N- to C-terminus: Urease subunit alpha (572 aa).

A Urease domain is found at Gly-136 to Phe-572. The Ni(2+) site is built by His-141, His-143, and Lys-224. N6-carboxylysine is present on Lys-224. His-226 provides a ligand contact to substrate. Ni(2+) contacts are provided by His-253 and His-279. The active-site Proton donor is the His-327. Asp-367 is a Ni(2+) binding site.

This sequence belongs to the metallo-dependent hydrolases superfamily. Urease alpha subunit family. As to quaternary structure, heterotrimer of UreA (gamma), UreB (beta) and UreC (alpha) subunits. Three heterotrimers associate to form the active enzyme. Ni cation is required as a cofactor. Post-translationally, carboxylation allows a single lysine to coordinate two nickel ions.

The protein resides in the cytoplasm. It catalyses the reaction urea + 2 H2O + H(+) = hydrogencarbonate + 2 NH4(+). The protein operates within nitrogen metabolism; urea degradation; CO(2) and NH(3) from urea (urease route): step 1/1. This Actinobacillus pleuropneumoniae (Haemophilus pleuropneumoniae) protein is Urease subunit alpha.